The chain runs to 271 residues: MDTFTSAVKINWFPGHMKKTHDQLKKLASSLDGVIEVVDARAPTLTQNPEITAYFTNKPKLTLALKADLAQTVANSNILWGTLKQGLQLKRLVIKKLQTLFQAKKNQLKAKGLLVHQFRLAVIGMPNVGKSSLINLLLNKNHLQVANRAGVTKSMSWNQISSEFYLSDTPGVFFKRIDEMAVGYKLVLTNVIKREVVPLEDVGAFAFCYLSKHYPQLLPYEGTDFTEFLHKFAISRKLLQKSNQLNINLACELFVSELINGKYGKLSFELD.

One can recognise a CP-type G domain in the interval 21–175; the sequence is HDQLKKLASS…LSDTPGVFFK (155 aa). GTP is bound by residues 127–132 and G171; that span reads NVGKSS.

The protein belongs to the TRAFAC class YlqF/YawG GTPase family. MTG1 subfamily.

It is found in the cytoplasm. Functionally, required for a late step of 50S ribosomal subunit assembly. Has GTPase activity. Binds to the 23S rRNA. The chain is Probable ribosome biogenesis GTPase A (rbgA) from Mycoplasma pneumoniae (strain ATCC 29342 / M129 / Subtype 1) (Mycoplasmoides pneumoniae).